We begin with the raw amino-acid sequence, 425 residues long: Kynurenine/alpha-aminoadipate aminotransferase, mitochondrial (425 aa).

The N-terminal 29 residues, 1–29 (MNYARFITAASAARNPSPIRTMTDILSRG), are a transit peptide targeting the mitochondrion. R20 lines the substrate pocket. K69 bears the N6-acetyllysine mark. Substrate contacts are provided by Y74 and Y142. K179 carries the N6-acetyllysine modification. The tract at residues 181–208 (EDAKNPQKNTPKFLYTVPNGNNPTGNSL) is disordered. A compositionally biased stretch (polar residues) spans 198-208 (PNGNNPTGNSL). Residue N202 coordinates substrate. An N6-(pyridoxal phosphate)lysine; alternate modification is found at K263. An N6-acetyllysine; alternate mark is found at K263, K339, and K367. 3 positions are modified to N6-succinyllysine; alternate: K263, K339, and K367. Position 399 (R399) interacts with substrate. At K422 the chain carries N6-acetyllysine.

It belongs to the class-I pyridoxal-phosphate-dependent aminotransferase family. As to quaternary structure, homodimer. Pyridoxal 5'-phosphate serves as cofactor. Higher expression in the liver. Also found in heart, brain, kidney, pancreas, prostate, testis and ovary.

Its subcellular location is the mitochondrion. It carries out the reaction glycine + 2-oxoglutarate = glyoxylate + L-glutamate. The catalysed reaction is L-kynurenine + 2-oxoglutarate = kynurenate + L-glutamate + H2O. It catalyses the reaction L-kynurenine + glyoxylate = kynurenate + glycine + H2O. The enzyme catalyses 3-hydroxy-L-kynurenine + glyoxylate = xanthurenate + glycine + H2O. It carries out the reaction 2-oxohexanoate + L-kynurenine = L-2-aminohexanoate + kynurenate + H2O. The catalysed reaction is 3-phenylpyruvate + L-kynurenine = kynurenate + L-phenylalanine + H2O. It catalyses the reaction 4-methylsulfanyl-2-oxobutanoate + L-kynurenine = kynurenate + L-methionine + H2O. The enzyme catalyses 2-oxo-3-sulfanylpropanoate + L-kynurenine = kynurenate + L-cysteine + H2O. It carries out the reaction indole-3-pyruvate + L-kynurenine = kynurenate + L-tryptophan + H2O. The catalysed reaction is 2-oxopentanoate + L-kynurenine = L-2-aminopentanoate + kynurenate + H2O. It catalyses the reaction 4-methyl-2-oxopentanoate + L-kynurenine = kynurenate + L-leucine + H2O. The enzyme catalyses L-2-aminoadipate + 2-oxoglutarate = 2-oxoadipate + L-glutamate. It carries out the reaction glyoxylate + L-methionine = 4-methylsulfanyl-2-oxobutanoate + glycine. The catalysed reaction is L-2-aminoadipate + glyoxylate = 2-oxoadipate + glycine. It catalyses the reaction L-tyrosine + glyoxylate = 3-(4-hydroxyphenyl)pyruvate + glycine. The enzyme catalyses glyoxylate + L-phenylalanine = 3-phenylpyruvate + glycine. It carries out the reaction L-tryptophan + glyoxylate = indole-3-pyruvate + glycine. The catalysed reaction is L-leucine + glyoxylate = 4-methyl-2-oxopentanoate + glycine. It catalyses the reaction 2-oxobutanoate + L-kynurenine = (2S)-2-aminobutanoate + kynurenate + H2O. The enzyme catalyses 2-oxoadipate + L-kynurenine = L-2-aminoadipate + kynurenate + H2O. It functions in the pathway amino-acid degradation; L-lysine degradation via saccharopine pathway; glutaryl-CoA from L-lysine: step 4/6. Its activity is regulated as follows. Kynurenine transaminase activity is competitively inhibited by aminoadipate, asparagine, glutamate, histidine, cysteine, lysine, 3-hydroxy-kynurenine and phenylalanine. Its function is as follows. Transaminase with broad substrate specificity. Has transaminase activity towards aminoadipate, kynurenine, methionine and glutamate. Shows activity also towards tryptophan, aspartate and hydroxykynurenine. Accepts a variety of oxo-acids as amino-group acceptors, with a preference for 2-oxoglutarate, 2-oxocaproic acid, phenylpyruvate and alpha-oxo-gamma-methiol butyric acid. Can also use glyoxylate as amino-group acceptor (in vitro). The chain is Kynurenine/alpha-aminoadipate aminotransferase, mitochondrial from Homo sapiens (Human).